Here is a 256-residue protein sequence, read N- to C-terminus: Thiazole synthase (256 aa).

Residue K98 is the Schiff-base intermediate with DXP of the active site. Residues G159, A185–G186, and N207–T208 contribute to the 1-deoxy-D-xylulose 5-phosphate site.

It belongs to the ThiG family. As to quaternary structure, homotetramer. Forms heterodimers with either ThiH or ThiS.

Its subcellular location is the cytoplasm. The enzyme catalyses [ThiS sulfur-carrier protein]-C-terminal-Gly-aminoethanethioate + 2-iminoacetate + 1-deoxy-D-xylulose 5-phosphate = [ThiS sulfur-carrier protein]-C-terminal Gly-Gly + 2-[(2R,5Z)-2-carboxy-4-methylthiazol-5(2H)-ylidene]ethyl phosphate + 2 H2O + H(+). It functions in the pathway cofactor biosynthesis; thiamine diphosphate biosynthesis. Catalyzes the rearrangement of 1-deoxy-D-xylulose 5-phosphate (DXP) to produce the thiazole phosphate moiety of thiamine. Sulfur is provided by the thiocarboxylate moiety of the carrier protein ThiS. In vitro, sulfur can be provided by H(2)S. The sequence is that of Thiazole synthase (thiG) from Bacillus subtilis (strain 168).